A 152-amino-acid chain; its full sequence is Regulatory protein RecX (152 aa).

It belongs to the RecX family.

Its subcellular location is the cytoplasm. Its function is as follows. Modulates RecA activity. The chain is Regulatory protein RecX from Haemophilus influenzae (strain PittGG).